We begin with the raw amino-acid sequence, 269 residues long: Shikimate dehydrogenase (NADP(+)) (269 aa).

Shikimate-binding positions include 14-16 (SKS) and threonine 61. Lysine 65 (proton acceptor) is an active-site residue. Glutamate 77 contacts NADP(+). Positions 86 and 102 each coordinate shikimate. NADP(+) is bound by residues 126–130 (GAGGA), 149–154 (NRTLSK), and methionine 213. Tyrosine 215 provides a ligand contact to shikimate. Glycine 238 is a binding site for NADP(+).

The protein belongs to the shikimate dehydrogenase family. Homodimer.

The catalysed reaction is shikimate + NADP(+) = 3-dehydroshikimate + NADPH + H(+). It functions in the pathway metabolic intermediate biosynthesis; chorismate biosynthesis; chorismate from D-erythrose 4-phosphate and phosphoenolpyruvate: step 4/7. Its function is as follows. Involved in the biosynthesis of the chorismate, which leads to the biosynthesis of aromatic amino acids. Catalyzes the reversible NADPH linked reduction of 3-dehydroshikimate (DHSA) to yield shikimate (SA). In Pasteurella multocida (strain Pm70), this protein is Shikimate dehydrogenase (NADP(+)).